We begin with the raw amino-acid sequence, 332 residues long: Glycerol-3-phosphate dehydrogenase [NAD(P)+] (332 aa).

NADPH-binding residues include W11, R30, and K108. Sn-glycerol 3-phosphate-binding residues include K108, G137, and S139. A141 provides a ligand contact to NADPH. 5 residues coordinate sn-glycerol 3-phosphate: K192, D245, S255, R256, and N257. Catalysis depends on K192, which acts as the Proton acceptor. Position 256 (R256) interacts with NADPH. NADPH contacts are provided by V280 and E282.

This sequence belongs to the NAD-dependent glycerol-3-phosphate dehydrogenase family.

The protein resides in the cytoplasm. The catalysed reaction is sn-glycerol 3-phosphate + NAD(+) = dihydroxyacetone phosphate + NADH + H(+). It carries out the reaction sn-glycerol 3-phosphate + NADP(+) = dihydroxyacetone phosphate + NADPH + H(+). Its pathway is membrane lipid metabolism; glycerophospholipid metabolism. Functionally, catalyzes the reduction of the glycolytic intermediate dihydroxyacetone phosphate (DHAP) to sn-glycerol 3-phosphate (G3P), the key precursor for phospholipid synthesis. This chain is Glycerol-3-phosphate dehydrogenase [NAD(P)+], found in Burkholderia vietnamiensis (strain G4 / LMG 22486) (Burkholderia cepacia (strain R1808)).